The chain runs to 540 residues: Putative sel1-like repeat-containing protein R815 (540 aa).

Sel1-like repeat units follow at residues 129–164 (IDAQ…YKEN), 165–200 (LFGL…KHNY), 201–236 (PAVK…NQGY), 237–272 (PLAQ…NNGC), 273–308 (LYAT…SENY), and 309–344 (LLAI…NSTK).

The sequence is that of Putative sel1-like repeat-containing protein R815 from Acanthamoeba polyphaga (Amoeba).